The primary structure comprises 476 residues: H2.0-like homeobox protein (476 aa).

Disordered regions lie at residues 120–169 (QHLP…PSSK), 328–401 (WRHS…HQTT), and 413–476 (TASS…LAGL). 2 stretches are compositionally biased toward low complexity: residues 123–134 (PQQSPTQQQQPQ) and 158–168 (HHSGSAPAPSS). Positions 273–332 (RSWSRAVFSNLQRKGLEKRFEIQKYVTKPDRKQLAAMLGLTDAQVKVWFQNRRMKWRHSK) form a DNA-binding region, homeobox. Basic and acidic residues-rich tracts occupy residues 331–346 (SKEA…EAGE) and 355–368 (EGER…RSEG). The span at 369–379 (EAESESSDSES) shows a compositional bias: acidic residues. The segment covering 386–397 (DTERTEGTERSL) has biased composition (basic and acidic residues). Over residues 413–434 (TASSSTSGSSFSFSSTSSLGSG) the composition is skewed to low complexity. 2 stretches are compositionally biased toward polar residues: residues 435 to 446 (NTHVGSASSLGG) and 455 to 467 (HQPS…QSPE).

The protein belongs to the H2.0 homeobox family. As to expression, expressed in Th1 cells, CD8-positive T-cells, B-cells and NK cells.

It localises to the nucleus. Functionally, transcription factor required for TBX21/T-bet-dependent maturation of Th1 cells as well as maintenance of Th1-specific gene expression. Involved in embryogenesis and hematopoiesis. The chain is H2.0-like homeobox protein (Hlx) from Mus musculus (Mouse).